The sequence spans 543 residues: Protein lin-9 homolog (543 aa).

The tract at residues 21-82 is disordered; sequence REGSLSNTLN…SRSPRRSQRV (62 aa). Polar residues predominate over residues 24 to 55; that stretch reads SLSNTLNEKNNLPKSQTTRGRSSYVSMETPTR. Residues 355–451 are a coiled coil; it reads IKKEHIKHLK…VLRQNNTLAS (97 aa).

This sequence belongs to the lin-9 family. Component of the DREAM complex.

It localises to the nucleus. The polypeptide is Protein lin-9 homolog (lin9) (Danio rerio (Zebrafish)).